An 837-amino-acid polypeptide reads, in one-letter code: Protein translocase subunit SecA 1 (837 aa).

ATP is bound by residues Q85, 103–107 (GEGKT), and D492. A compositionally biased stretch (basic and acidic residues) spans 787–806 (QEVAKGEAVHPKEDGEEPKK). Positions 787 to 813 (QEVAKGEAVHPKEDGEEPKKKPIRKAV) are disordered. C821, C823, C832, and C833 together coordinate Zn(2+).

The protein belongs to the SecA family. As to quaternary structure, monomer and homodimer. Part of the essential Sec protein translocation apparatus which comprises SecA, SecYEG and auxiliary proteins SecDF. Other proteins may also be involved. Zn(2+) serves as cofactor.

It is found in the cell membrane. It localises to the cytoplasm. It catalyses the reaction ATP + H2O + cellular proteinSide 1 = ADP + phosphate + cellular proteinSide 2.. Its function is as follows. Part of the Sec protein translocase complex. Interacts with the SecYEG preprotein conducting channel. Has a central role in coupling the hydrolysis of ATP to the transfer of proteins into and across the cell membrane, serving as an ATP-driven molecular motor driving the stepwise translocation of polypeptide chains across the membrane. This is Protein translocase subunit SecA 1 from Geobacillus thermodenitrificans (strain NG80-2).